The chain runs to 326 residues: Target of rapamycin complex subunit lst8 (326 aa).

7 WD repeats span residues 1–37 (MNVNQGTVGSDPVILATAGYDHTVRFWQAHSGICTRT), 40–80 (HQDS…PVIN), 83–122 (GVSKNITSVGFHEDGRWMYTGGEDCMARIWDLRSRNLQCQ), 126–165 (QVNAPINCVCLHPNQAELIVGDQSGVIHIWDLKTDHNEQL), 168–207 (EPDVSVNSVHIDPDASYMAAVNSSGNCYVWNLAGGMGDEV), 218–257 (AHKRYSLRCKFSPDSTLLATCSADQTCKIWRTSNFSLMTE), and 268–309 (TSRG…REYS).

It belongs to the WD repeat LST8 family. Part of the mechanistic target of rapamycin complex 1 (mTORC1) which contains MTOR, MLST8 and RPTOR. Component of the mechanistic target of rapamycin complex 2 (mTORC2), consisting in two heterotretramers composed of MTOR, MLST8, RICTOR and MAPKAP1/SIN1.

It localises to the lysosome membrane. The protein resides in the cytoplasm. In terms of biological role, subunit of both mTORC1 and mTORC2, which regulates cell growth and survival in response to nutrient and hormonal signals. mTORC1 is activated in response to growth factors or amino acids. In response to nutrients, mTORC1 is recruited to the lysosome membrane and promotes protein, lipid and nucleotide synthesis by phosphorylating several substrates, such as ribosomal protein S6 kinase (RPS6KB1 and RPS6KB2) and EIF4EBP1 (4E-BP1). In the same time, it inhibits catabolic pathways by phosphorylating the autophagy initiation components ULK1 and ATG13, as well as transcription factor TFEB, a master regulators of lysosomal biogenesis and autophagy. The mTORC1 complex is inhibited in response to starvation and amino acid depletion. Within mTORC1, MLST8 interacts directly with MTOR and enhances its kinase activity. In nutrient-poor conditions, stabilizes the MTOR-RPTOR interaction and favors RPTOR-mediated inhibition of MTOR activity. As part of the mTORC2 complex, transduces signals from growth factors to pathways involved in proliferation, cytoskeletal organization, lipogenesis and anabolic output. mTORC2 is also activated by growth factors, but seems to be nutrient-insensitive. In response to growth factors, mTORC2 phosphorylates and activates AGC protein kinase family members, including AKT (AKT1, AKT2 and AKT3), PKC (PRKCA, PRKCB and PRKCE) and SGK1. mTORC2 functions upstream of Rho GTPases to regulate the actin cytoskeleton, probably by activating one or more Rho-type guanine nucleotide exchange factors. mTORC2 promotes the serum-induced formation of stress-fibers or F-actin. Within mTORC2, MLST8 acts as a bridge between MAPKAP1/SIN1 and MTOR. The polypeptide is Target of rapamycin complex subunit lst8 (mlst8) (Danio rerio (Zebrafish)).